The sequence spans 936 residues: Calcium homeostasis endoplasmic reticulum protein (936 aa).

Met1 carries the N-acetylmethionine modification. The SURP motif repeat unit spans residues Val15–Lys57. The residue at position 18 (Lys18) is an N6-acetyllysine. The disordered stretch occupies residues Glu77–Thr102. Residues Ala81–Ala91 are compositionally biased toward pro residues. The CID domain maps to Glu149–Gly289. Residues Leu328–Asp646 are disordered. A compositionally biased stretch (low complexity) spans Gln330–Gln355. Residues Thr363–Thr383 are compositionally biased toward pro residues. Polar residues predominate over residues Pro395 to Gly405. The segment covering Pro488 to Gln500 has biased composition (low complexity). The segment covering Pro534–Pro550 has biased composition (pro residues). Low complexity predominate over residues His551–Phe560. Residues Met561–Glu572 are compositionally biased toward basic and acidic residues. Positions Pro594–Pro603 are enriched in basic residues. Tyr723 is subject to Phosphotyrosine. A disordered region spans residues Arg731–Asp887. Positions Ser748 to Ser758 are enriched in basic residues. Residues Ser759–Ser773 are compositionally biased toward low complexity. Basic residues predominate over residues Ser774–Ser824. Phosphoserine occurs at positions 822, 824, and 826. Thr828 is subject to Phosphothreonine. Phosphoserine is present on Ser837. Residues Glu850–Asp900 enclose the G-patch domain. Lys853 is covalently cross-linked (Glycyl lysine isopeptide (Lys-Gly) (interchain with G-Cter in SUMO2)). Phosphoserine occurs at positions 864 and 866. Lys881 is covalently cross-linked (Glycyl lysine isopeptide (Lys-Gly) (interchain with G-Cter in SUMO2)). The residue at position 888 (Lys888) is an N6-acetyllysine. A Phosphoserine modification is found at Ser913.

Its subcellular location is the cytoplasm. It localises to the perinuclear region. The protein resides in the endoplasmic reticulum. Its function is as follows. Involved in calcium homeostasis, growth and proliferation. The sequence is that of Calcium homeostasis endoplasmic reticulum protein from Mus musculus (Mouse).